Consider the following 526-residue polypeptide: Sugar transport protein 13 (526 aa).

The Cytoplasmic portion of the chain corresponds to 1 to 18 (MTGGGFATSANGVEFEAK). Residues 19–39 (ITPIVIISCIMAATGGLMFGY) form a helical membrane-spanning segment. At 40 to 81 (DVGVSGGVTSMPDFLEKFFPVVYRKVVAGADKDSNYCKYDNQ) the chain is on the extracellular side. The helical transmembrane segment at 82 to 102 (GLQLFTSSLYLAGLTATFFAS) threads the bilayer. Over 103 to 111 (YTTRTLGRR) the chain is Cytoplasmic. Residues 112 to 132 (LTMLIAGVFFIIGVALNAGAQ) traverse the membrane as a helical segment. Over 133–141 (DLAMLIAGR) the chain is Extracellular. The helical transmembrane segment at 142–162 (ILLGCGVGFANQAVPLFLSEI) threads the bilayer. At 163 to 168 (APTRIR) the chain is on the cytoplasmic side. A helical membrane pass occupies residues 169 to 189 (GGLNILFQLNVTIGILFANLV). Residues 190–203 (NYGTAKIKGGWGWR) are Extracellular-facing. Residues 204–224 (LSLGLAGIPALLLTVGALLVT) traverse the membrane as a helical segment. Residues 225 to 296 (ETPNSLVERG…IAVALQIFQQ (72 aa)) are Cytoplasmic-facing. Residues 297–317 (CTGINAIMFYAPVLFSTLGFG) form a helical membrane-spanning segment. The Extracellular segment spans residues 318 to 319 (SD). Residues 320 to 340 (ASLYSAVVTGAVNVLSTLVSI) form a helical membrane-spanning segment. Residues 341–349 (YSVDKVGRR) lie on the Cytoplasmic side of the membrane. Residues 350 to 370 (VLLLEAGVQMFFSQVVIAIIL) traverse the membrane as a helical segment. Residues 371 to 383 (GVKVTDTSTNLSK) are Extracellular-facing. Residues 384–404 (GFAILVVVMICTYVAAFAWSW) traverse the membrane as a helical segment. Residues 405-426 (GPLGWLIPSETFPLETRSAGQS) lie on the Cytoplasmic side of the membrane. Residues 427 to 447 (VTVCVNLLFTFIIAQAFLSML) traverse the membrane as a helical segment. Residues 448–451 (CHFK) lie on the Extracellular side of the membrane. A helical membrane pass occupies residues 452–472 (FGIFIFFSAWVLIMSVFVMFL). Topologically, residues 473-526 (LPETKNIPIEEMTERVWKKHWFWARFMDDHNDHEFVNGEKSNGKSNGFDPSTRL) are cytoplasmic.

It belongs to the major facilitator superfamily. Sugar transporter (TC 2.A.1.1) family.

The protein localises to the cell membrane. Its function is as follows. Mediates an active uptake of hexoses, probably by sugar/hydrogen symport. This Arabidopsis thaliana (Mouse-ear cress) protein is Sugar transport protein 13 (STP13).